Consider the following 364-residue polypeptide: Probable endopolygalacturonase B (364 aa).

The first 20 residues, 1-20, serve as a signal peptide directing secretion; sequence MHFFQSSLVAATMGAALVAA. The propeptide occupies 21-29; sequence APAADLETR. An intrachain disulfide couples C32 to C47. N138 and N141 each carry an N-linked (GlcNAc...) asparagine glycan. 6 PbH1 repeats span residues 159–188, 189–210, 211–231, 240–261, 269–291, and 303–324; these read SDHLTIKDVLLDNSAGTKLGHNTDAFDVGS, STYITIDGATVYNQDDCLAVNS, GEHITFTNGYCNGGHGLSIGS, VNDVTISNSQVINSQNGARIKT, VTGVKFQDISLKGITKYGIVVQQ, and TNGVKVSDITFEKVTGTVTSSA. Residue D203 is the Proton donor of the active site. C205 and C221 are oxidised to a cystine. The active site involves H225. C331 and C336 are oxidised to a cystine. N338 is a glycosylation site (N-linked (GlcNAc...) asparagine). An intrachain disulfide couples C355 to C364.

This sequence belongs to the glycosyl hydrolase 28 family.

Its subcellular location is the secreted. The catalysed reaction is (1,4-alpha-D-galacturonosyl)n+m + H2O = (1,4-alpha-D-galacturonosyl)n + (1,4-alpha-D-galacturonosyl)m.. Its function is as follows. Involved in maceration and soft-rotting of plant tissue. Hydrolyzes the 1,4-alpha glycosidic bonds of de-esterified pectate in the smooth region of the plant cell wall. In Aspergillus fumigatus (strain CBS 144.89 / FGSC A1163 / CEA10) (Neosartorya fumigata), this protein is Probable endopolygalacturonase B (pgaB).